The sequence spans 89 residues: Small ribosomal subunit protein uS17 (89 aa).

This sequence belongs to the universal ribosomal protein uS17 family. Part of the 30S ribosomal subunit.

One of the primary rRNA binding proteins, it binds specifically to the 5'-end of 16S ribosomal RNA. This is Small ribosomal subunit protein uS17 from Ralstonia pickettii (strain 12J).